A 243-amino-acid chain; its full sequence is UDP-2,3-diacylglucosamine hydrolase (243 aa).

Positions 9, 11, 42, 79, and 114 each coordinate Mn(2+). 79–80 (NR) lines the substrate pocket. Substrate is bound by residues D122, S160, N164, and H195. Mn(2+) is bound by residues H195 and H197.

This sequence belongs to the LpxH family. Mn(2+) is required as a cofactor.

The protein resides in the cell inner membrane. The enzyme catalyses UDP-2-N,3-O-bis[(3R)-3-hydroxytetradecanoyl]-alpha-D-glucosamine + H2O = 2-N,3-O-bis[(3R)-3-hydroxytetradecanoyl]-alpha-D-glucosaminyl 1-phosphate + UMP + 2 H(+). The protein operates within glycolipid biosynthesis; lipid IV(A) biosynthesis; lipid IV(A) from (3R)-3-hydroxytetradecanoyl-[acyl-carrier-protein] and UDP-N-acetyl-alpha-D-glucosamine: step 4/6. Functionally, hydrolyzes the pyrophosphate bond of UDP-2,3-diacylglucosamine to yield 2,3-diacylglucosamine 1-phosphate (lipid X) and UMP by catalyzing the attack of water at the alpha-P atom. Involved in the biosynthesis of lipid A, a phosphorylated glycolipid that anchors the lipopolysaccharide to the outer membrane of the cell. The chain is UDP-2,3-diacylglucosamine hydrolase from Coxiella burnetii (strain Dugway 5J108-111).